Reading from the N-terminus, the 243-residue chain is E3 ubiquitin-protein ligase RMA3 (243 aa).

The RING-type zinc finger occupies 44–92 (CNICLDTAHDPVVTLCGHLFCWPCIYKWLHVQLSSVSVDQHQNNCPVCK). Positions 110 to 135 (SPSSTFGSKKQDALSTDIPRRPAPSA) are disordered. The helical; Anchor for type IV membrane protein transmembrane segment at 223-243 (KSLNRVSIFFLCCIILCLLLF) threads the bilayer.

In terms of tissue distribution, ubiquitous. Highly expressed in roots.

It is found in the endoplasmic reticulum membrane. It catalyses the reaction S-ubiquitinyl-[E2 ubiquitin-conjugating enzyme]-L-cysteine + [acceptor protein]-L-lysine = [E2 ubiquitin-conjugating enzyme]-L-cysteine + N(6)-ubiquitinyl-[acceptor protein]-L-lysine.. It participates in protein modification; protein ubiquitination. Functionally, E3 ubiquitin-protein ligase. This is E3 ubiquitin-protein ligase RMA3 (RMA3) from Arabidopsis thaliana (Mouse-ear cress).